We begin with the raw amino-acid sequence, 166 residues long: Interferon gamma (166 aa).

An N-terminal signal peptide occupies residues 1-23 (MNYTSYILAFQLCVILCSSGYYC). Pyrrolidone carboxylic acid is present on Q24. Residues N39 and N106 are each glycosylated (N-linked (GlcNAc...) asparagine).

The protein belongs to the type II (or gamma) interferon family. In terms of assembly, homodimer. Interacts with IFNGR1 (via extracellular domain); this interaction promotes IFNGR1 dimerization. As to expression, released primarily from activated T lymphocytes.

It is found in the secreted. Functionally, type II interferon produced by immune cells such as T-cells and NK cells that plays crucial roles in antimicrobial, antiviral, and antitumor responses by activating effector immune cells and enhancing antigen presentation. Primarily signals through the JAK-STAT pathway after interaction with its receptor IFNGR1 to affect gene regulation. Upon IFNG binding, IFNGR1 intracellular domain opens out to allow association of downstream signaling components JAK2, JAK1 and STAT1, leading to STAT1 activation, nuclear translocation and transcription of IFNG-regulated genes. Many of the induced genes are transcription factors such as IRF1 that are able to further drive regulation of a next wave of transcription. Plays a role in class I antigen presentation pathway by inducing a replacement of catalytic proteasome subunits with immunoproteasome subunits. In turn, increases the quantity, quality, and repertoire of peptides for class I MHC loading. Increases the efficiency of peptide generation also by inducing the expression of activator PA28 that associates with the proteasome and alters its proteolytic cleavage preference. Up-regulates as well MHC II complexes on the cell surface by promoting expression of several key molecules such as cathepsins B/CTSB, H/CTSH, and L/CTSL. Participates in the regulation of hematopoietic stem cells during development and under homeostatic conditions by affecting their development, quiescence, and differentiation. The polypeptide is Interferon gamma (IFNG) (Ailuropoda melanoleuca (Giant panda)).